The primary structure comprises 410 residues: Elongation factor Tu, chloroplastic (410 aa).

Residues 10-215 (KPHVNIGTIG…AVDQYIPTPK (206 aa)) enclose the tr-type G domain. Positions 19-26 (GHVDHGKT) are G1. 19–26 (GHVDHGKT) is a binding site for GTP. Mg(2+) is bound at residue Thr26. The G2 stretch occupies residues 61 to 65 (GITIN). Positions 82 to 85 (DCPG) are G3. GTP-binding positions include 82–86 (DCPGH) and 137–140 (NKQD). The tract at residues 137–140 (NKQD) is G4. Positions 175–177 (SAL) are G5.

It belongs to the TRAFAC class translation factor GTPase superfamily. Classic translation factor GTPase family. EF-Tu/EF-1A subfamily.

The protein resides in the plastid. The protein localises to the chloroplast. It carries out the reaction GTP + H2O = GDP + phosphate + H(+). In terms of biological role, GTP hydrolase that promotes the GTP-dependent binding of aminoacyl-tRNA to the A-site of ribosomes during protein biosynthesis. This chain is Elongation factor Tu, chloroplastic (tufA), found in Nephroselmis olivacea (Green alga).